The sequence spans 170 residues: Dual-action ribosomal maturation protein DarP (170 aa).

Belongs to the DarP family.

The protein localises to the cytoplasm. Member of a network of 50S ribosomal subunit biogenesis factors which assembles along the 30S-50S interface, preventing incorrect 23S rRNA structures from forming. Promotes peptidyl transferase center (PTC) maturation. The polypeptide is Dual-action ribosomal maturation protein DarP (Neisseria meningitidis serogroup A / serotype 4A (strain DSM 15465 / Z2491)).